The following is a 217-amino-acid chain: Probable GTP-binding protein EngB (217 aa).

In terms of domain architecture, EngB-type G spans 29-213 (GPPEVAFAGR…RQAIAETVGI (185 aa)). Residues 37-44 (GRSNVGKS), 64-68 (GRTQE), 91-94 (DMPG), 158-161 (TKTD), and 192-194 (TSS) contribute to the GTP site. Mg(2+)-binding residues include Ser-44 and Thr-66.

The protein belongs to the TRAFAC class TrmE-Era-EngA-EngB-Septin-like GTPase superfamily. EngB GTPase family. Mg(2+) serves as cofactor.

Its function is as follows. Necessary for normal cell division and for the maintenance of normal septation. The polypeptide is Probable GTP-binding protein EngB (Rhizobium etli (strain ATCC 51251 / DSM 11541 / JCM 21823 / NBRC 15573 / CFN 42)).